The chain runs to 362 residues: Aminomethyltransferase (362 aa).

The protein belongs to the GcvT family. In terms of assembly, the glycine cleavage system is composed of four proteins: P, T, L and H.

It catalyses the reaction N(6)-[(R)-S(8)-aminomethyldihydrolipoyl]-L-lysyl-[protein] + (6S)-5,6,7,8-tetrahydrofolate = N(6)-[(R)-dihydrolipoyl]-L-lysyl-[protein] + (6R)-5,10-methylene-5,6,7,8-tetrahydrofolate + NH4(+). The glycine cleavage system catalyzes the degradation of glycine. This is Aminomethyltransferase from Chromobacterium violaceum (strain ATCC 12472 / DSM 30191 / JCM 1249 / CCUG 213 / NBRC 12614 / NCIMB 9131 / NCTC 9757 / MK).